The following is a 266-amino-acid chain: Putative carbamate hydrolase RutD (266 aa).

One can recognise an AB hydrolase-1 domain in the interval 14–115; sequence PVVVLISGLG…TVLISVNGWL (102 aa).

Belongs to the AB hydrolase superfamily. Hydrolase RutD family.

It carries out the reaction carbamate + 2 H(+) = NH4(+) + CO2. Its function is as follows. Involved in pyrimidine catabolism. May facilitate the hydrolysis of carbamate, a reaction that can also occur spontaneously. The chain is Putative carbamate hydrolase RutD from Shigella sonnei (strain Ss046).